We begin with the raw amino-acid sequence, 246 residues long: TLC domain-containing protein 2 (246 aa).

The next 6 helical transmembrane spans lie at 5–25 (SVIL…YGLG), 43–63 (ISTS…CFCM), 79–99 (SHAL…DMVI), 107–127 (WELL…VLTC), 128–148 (RYVG…FLHL), and 199–219 (FSYT…IVLF). In terms of domain architecture, TLC spans 35-231 (RNAWKWNNIS…LMRSDFMKAS (197 aa)).

This sequence belongs to the TLCD family.

It is found in the cell membrane. Its function is as follows. Regulates the composition and fluidity of the plasma membrane. Inhibits the incorporation of membrane-fluidizing phospholipids containing omega-3 long-chain polyunsaturated fatty acids (LCPUFA) and thereby promotes membrane rigidity. Does not appear to have any effect on LCPUFA synthesis. This is TLC domain-containing protein 2 (tlcd2) from Danio rerio (Zebrafish).